Consider the following 354-residue polypeptide: Neutral protease 2 homolog SNOG_02177 (354 aa).

Positions 1–19 are cleaved as a signal peptide; sequence MKFQILSVAALASLASAVS. Positions 20–182 are excised as a propeptide; sequence DALDKRDSPL…WIDLAKRTIV (163 aa). Cystine bridges form between Cys186/Cys257 and Cys264/Cys282. Asn214 is a glycosylation site (N-linked (GlcNAc...) asparagine). His306 provides a ligand contact to Zn(2+). Residue Glu307 is part of the active site. His310 provides a ligand contact to Zn(2+).

It belongs to the peptidase M35 family. It depends on Zn(2+) as a cofactor.

It localises to the secreted. The catalysed reaction is Preferential cleavage of bonds with hydrophobic residues in P1'. Also 3-Asn-|-Gln-4 and 8-Gly-|-Ser-9 bonds in insulin B chain.. Functionally, secreted metalloproteinase that allows assimilation of proteinaceous substrates. Shows high activities on basic nuclear substrates such as histone and protamine. The polypeptide is Neutral protease 2 homolog SNOG_02177 (Phaeosphaeria nodorum (strain SN15 / ATCC MYA-4574 / FGSC 10173) (Glume blotch fungus)).